Reading from the N-terminus, the 909-residue chain is Villin-1 (909 aa).

Gelsolin-like repeat units follow at residues 29-79, 149-189, 262-305, 391-448, 529-569, and 631-672; these read KQLI…VDSI, VRVK…QEKA, GNLH…TERK, LKVW…QDRA, MQAI…SDHE, and LKVK…KSKE. Disordered stretches follow at residues 733–781 and 816–835; these read SLKG…CSSE and DGVA…QKPR. Basic and acidic residues predominate over residues 752 to 762; that stretch reads QSKDNASRDLQ. Ser780 is subject to Phosphoserine. The HP domain occupies 844–909; sequence SLESLAYSYE…NKLKISLHLF (66 aa).

The protein belongs to the villin/gelsolin family. Expressed in all tissues examined. Mainly detected in the vascular tissue and the pericycle of roots and in the vasculature of leaves. Not expressed in the root cap.

Its subcellular location is the cytoplasm. It is found in the cytoskeleton. In terms of biological role, binds actin and actin filament bundles in a Ca(2+)/calmodulin-insensitive manner, but is unable to sever, cap, and nucleate actin filament formation in vitro. Does not protect individual filaments from severing by VLN3 (AC O81645). The polypeptide is Villin-1 (Arabidopsis thaliana (Mouse-ear cress)).